The primary structure comprises 213 residues: ATP phosphoribosyltransferase (213 aa).

This sequence belongs to the ATP phosphoribosyltransferase family. Short subfamily. As to quaternary structure, heteromultimer composed of HisG and HisZ subunits.

The protein localises to the cytoplasm. The catalysed reaction is 1-(5-phospho-beta-D-ribosyl)-ATP + diphosphate = 5-phospho-alpha-D-ribose 1-diphosphate + ATP. It participates in amino-acid biosynthesis; L-histidine biosynthesis; L-histidine from 5-phospho-alpha-D-ribose 1-diphosphate: step 1/9. Functionally, catalyzes the condensation of ATP and 5-phosphoribose 1-diphosphate to form N'-(5'-phosphoribosyl)-ATP (PR-ATP). Has a crucial role in the pathway because the rate of histidine biosynthesis seems to be controlled primarily by regulation of HisG enzymatic activity. This chain is ATP phosphoribosyltransferase, found in Shouchella clausii (strain KSM-K16) (Alkalihalobacillus clausii).